Reading from the N-terminus, the 647-residue chain is Carotenoid phi-ring synthase (647 aa).

FAD contacts are provided by residues Ala67, 86 to 87, Lys94, and Tyr120; that span reads EA. The 95-residue stretch at 322 to 416 folds into the Rieske domain; that stretch reads VASIPKREVP…VREAGEMLVI (95 aa). The [2Fe-2S] cluster site is built by Cys362, His364, Cys380, and His383. 2 residues coordinate FAD: Asp601 and Met612.

Belongs to the carotenoid/retinoid oxidoreductase family. It depends on FAD as a cofactor. [2Fe-2S] cluster serves as cofactor.

The enzyme catalyses a carotenoid beta-end derivative + 2 A = a carotenoid phi-end derivative + 2 AH2. The protein operates within carotenoid biosynthesis. Involved in the biosynthesis of chlorobactene, a carotenoid with aromatic end group. Catalyzes the introduction of two additional double bonds into the ionone ring of gamma-carotene to produce chlorobactene. The reaction includes an intramolecular methyl transfer from position C1 to position C2 of the ring. This chain is Carotenoid phi-ring synthase, found in Chlorobaculum tepidum (strain ATCC 49652 / DSM 12025 / NBRC 103806 / TLS) (Chlorobium tepidum).